The chain runs to 644 residues: Macrolide export ATP-binding/permease protein MacB (644 aa).

The 239-residue stretch at 4 to 242 (IECKNINRCF…SNVGRIREKA (239 aa)) folds into the ABC transporter domain. 40-47 (GQSGSGKS) is an ATP binding site. The next 4 membrane-spanning stretches (helical) occupy residues 270-290 (LLTMLGIIIGIASVVSVVALG), 524-544 (IALISLVVGGIGVMNIMLVSV), 574-594 (LICIIGGLVGVGLSAAVSLVF), and 607-627 (AASVIGAVACSTGIGIAFGFM).

It belongs to the ABC transporter superfamily. Macrolide exporter (TC 3.A.1.122) family. As to quaternary structure, homodimer.

The protein resides in the cell inner membrane. Functionally, non-canonical ABC transporter that contains transmembrane domains (TMD), which form a pore in the inner membrane, and an ATP-binding domain (NBD), which is responsible for energy generation. Confers resistance against macrolides. This Neisseria gonorrhoeae (strain ATCC 700825 / FA 1090) protein is Macrolide export ATP-binding/permease protein MacB.